Consider the following 235-residue polypeptide: Glycerol-3-phosphate acyltransferase (235 aa).

Transmembrane regions (helical) follow at residues 4-24, 56-76, 90-110, 126-146, 152-172, and 191-211; these read LIVILAVSYLIGSIPTSIIAG, AVTLLDIVKGAVAAISVVVFF, VALRLIAGLAAVFGHVFTVFA, FGIAPVSTLIVLAVFLLTIFV, VASIIAAIAFPLVILVRKYLF, and IHDSLDFHLLIFGMIVAFAII.

The protein belongs to the PlsY family. In terms of assembly, probably interacts with PlsX.

The protein localises to the cell inner membrane. The enzyme catalyses an acyl phosphate + sn-glycerol 3-phosphate = a 1-acyl-sn-glycero-3-phosphate + phosphate. It participates in lipid metabolism; phospholipid metabolism. Catalyzes the transfer of an acyl group from acyl-phosphate (acyl-PO(4)) to glycerol-3-phosphate (G3P) to form lysophosphatidic acid (LPA). This enzyme utilizes acyl-phosphate as fatty acyl donor, but not acyl-CoA or acyl-ACP. This Prosthecochloris aestuarii (strain DSM 271 / SK 413) protein is Glycerol-3-phosphate acyltransferase.